The primary structure comprises 305 residues: Virulence plasmid integrase pGP7-D (305 aa).

The region spanning 13–99 is the Core-binding (CB) domain; it reads LTFGDASEIW…CYISFTKFLY (87 aa). Residues 127–305 enclose the Tyr recombinase domain; the sequence is IKTESISKQE…SPLVQTPPIL (179 aa). Catalysis depends on residues Lys188 and Arg257. Tyr289 acts as the O-(3'-phospho-DNA)-tyrosine intermediate in catalysis.

This sequence belongs to the 'phage' integrase family.

In Chlamydia trachomatis serovar L2 (strain ATCC VR-902B / DSM 19102 / 434/Bu), this protein is Virulence plasmid integrase pGP7-D.